Consider the following 991-residue polypeptide: MKKKFIKMLCSIAIGCMISTSYSIKVSAFSNGNTKTNPNGEFKSLSLNSTNPYKTKYSFNDLNKLSNKEILDLTSKIKWSDISDLFQYNKDSYTFYSNKERVQALIDGLYEKGCNYTSTDDKGIDTLVEILRSGFYLGYYNDSLKYLNDKSFKDKCIPAMIAIENNKNFKLGENGQDTVVHALGKLIGNTSCNDEVVNKTIPILEQYYNEIDKYSKDRLKSNAVYNFMKEINYDISQYEYAHNIRDYKNTPWSGKIDSFIDTISKFASISNVTKDNGWIINNSIYYTAKLSKYHSNPSIPHSVIDNCIEIFPDYSEQYFTAIEAIKEDFNSRDSKGNVIDINKLIEEGKKHYLPKTYTFDNGKIIIKAGDKVEESKIQKLYWASKEVKSQFHRIIGNDKPLEVGNADDILTIVIYNNPEEYKLNKTLYGYSVDNGGIYIEGIGTFFTYERTPQESIYSLEELFRHEFTHYLQGRYLIPGLFNKGDFYKGNNGRITWFEEGSAEFFAGSTRTSVLPRKSMVGGLSKNPKERFNADKLLHSKYSDGWDFYKYGYAFSDYMYNNNKKLFSDLVSTMKNNDVKGYEALIEESSKDSKINKDYEYHMENLVNNYDNYTIPLVSDDYMKQYDNKSLHEIKSDIEKAMDVKNSQITKESSQYFDTYNLKATYTLSSNKGEISNWNYMNNKINEALNKLDNLSWGGYKTVTAYFSNPRLNSNNEVVYDIVFHGLLSHNKNSNEKVEVKEEPEIKDKDSFENVIYEKENNDSFDKANKIHKNQIVMATLDTEDYRDTFYFDALTSGSIDITIENIHGNSDAFNWLVYNDEDLNNYIAYPTKKEDNKLMGSFKVHKPGRYYILVYKTSLNKVNYKLNISDATNMAPVIKKIHEKENNDSFETANKITLDTLVLGNLDYKDVSDIYSFDIENTKDLNIKLTNLNNLGIAWNLYKESDLNNYIAYGAKSDNAIVGKCNLSPGKYYLYVYKYSGDKGNYSVIIN.

A signal peptide spans 1 to 28 (MKKKFIKMLCSIAIGCMISTSYSIKVSA). The propeptide occupies 29–52 (FSNGNTKTNPNGEFKSLSLNSTNP). Residues 53–727 (YKTKYSFNDL…VYDIVFHGLL (675 aa)) are S1 metalloprotease domain, degrades FALGPA (furylacryloyl-Leu-Gly-Pro-Ala). An activator domain region spans residues 57–330 (YSFNDLNKLS…AIEAIKEDFN (274 aa)). The interval 340–611 (DINKLIEEGK…MENLVNNYDN (272 aa)) is catalytic subdomain. Glutamate 440 is a binding site for Ca(2+). Position 465 (histidine 465) interacts with Zn(2+). The active site involves glutamate 466. Residue histidine 469 coordinates Zn(2+). The Ca(2+) site is built by glycine 473, isoleucine 477, and glycine 479. Glutamate 499 serves as a coordination point for Zn(2+). Residues 619-731 (DDYMKQYDNK…VFHGLLSHNK (113 aa)) are helper subdomain. 2 collagen-binding domain regions span residues 755–870 (IYEK…NISD) and 878–991 (IKKI…VIIN). Ca(2+) is bound by residues glutamate 757, glutamate 759, asparagine 761, aspartate 784, aspartate 787, glutamate 883, glutamate 885, asparagine 887, aspartate 888, aspartate 910, and aspartate 913.

It belongs to the peptidase M9B family. Collagenase subfamily. Requires Ca(2+) as cofactor. It depends on Zn(2+) as a cofactor.

The protein localises to the secreted. It carries out the reaction Digestion of native collagen in the triple helical region at Xaa-|-Gly bonds. With synthetic peptides, a preference is shown for Gly at P3 and P1', Pro and Ala at P2 and P2', and hydroxyproline, Ala or Arg at P3'.. With respect to regulation, partially inhibited by 1-10-phenanthroline; inactivation is irreversible. Partially inhibited by EDTA; inactivation is reversible. Inhibited by broad-spectrum zinc metalloprotease inhibitor batimastat. N-aryl mercaptoacetamide-based inhibitors have been isolated that act on clostridial collagenases with submicromolar affinity while having negligibile activity on human collagenases. Its function is as follows. Clostridial collagenases are among the most efficient degraders of eukaryotic collagen known; saprophytes use collagen as a carbon source while pathogens additionally digest collagen to aid in host colonization. Has both tripeptidylcarboxypeptidase on Gly-X-Y and endopeptidase activities; the endopeptidase cuts within the triple helix region of collagen while tripeptidylcarboxypeptidase successively digests the exposed ends, thus clostridial collagenases can digest large sections of collagen. The activator domain (residues 57-330) and catalytic subdomain (340-611) open and close around substrate allowing digestion when the protein is closed. The chain is Collagenase ColT from Clostridium tetani (strain Massachusetts / E88).